The sequence spans 1498 residues: MSQNNKRQVQHNHEMSNDVCPLPLPPRGAPPPTAYHASRMAATSSSTNGSFEKSAIPGNARKLHVVIVIDQKVQKNLRVREMALKDVQKVADTLNVNLTRIDFDKLDFGETETLDLFYNADVALVDVTVTHQQPSLCYHIGVRESMGQSYNMILTYWSPDPEYHIMDALKKTHAHLPMIVYIHHQDSNQLQSYDKNNNDDDSKPPFARTNVPAKTITFQHRMKQVLKSVQVEASAHSREKFMSDLRKAREITDGDQKNDYLDKMRTRLDNPDVLHPDTVSLMMLSYRDNQNYGGMIRLVDDLKRIPDCLKVVDTPVIRYQYAFALNRRNKDGDRDLALNTVLSLVEGTTENEEKNGPLSPDVVCLAGRIYKDKFIASNYEDRESLNSAIEWYRRAFEMSPLEYSGINLTTLLRASGEHFENNLEMQQIAVVLNSLLGRKGALQNLMEYWDVATYFEVSVLAENYQKACEAALMMVKLKPPVWYLKSTMENIKLINRCAATISPIEKEKQQFLFWSEFFMEATEADTDISCPRYPVLILELNKEFTPSYLTLNNEEGTVILSHVLENSQQKKIHQSELRGIHRWHFARNNIKAVTESKRDDRQLFLYVHENSDDFNLLFPTKAHCKKAYDDMKSMADVADGNYQGRVLSNPDNEKIRFEYELSNSNERVVLGKGTYGTVYAARDMDTQRQIVVKEIEVKYDEEVQPLMEEISLHSTLCHANIVQYLGCDLVGKDGSNDHFLIFMEHVPGGSLSSLLRSKWGPMNENAMNYYGKQILEGLKYLHELKIVHRDIKGDNVLVNTYSGVCKISDFGTCKRLAGLNPVTETFTGTLQYMAPEVIDHGQRGYGAPADIWSFGCTMVEMATGRPPFVEMQNPQAAMFRVGMFKTHPPIPTEITEKCRNFIKSCFLPEACDRPSAKDLLQDPFIYHNHHSISRTRSGSINKKPATKIELNHDKEKKEKSKNQREMLRSTSHIGGMGVVERSPPTPEPMSATLTAGFSHVHSQTVSNALSTAREEKKLHLKIDHARNRTFSSSSPVPDGQSSAGTNMSHPGFQLSQPSSPIVDDTNHPHLIVSPISLNTMGSPLSSAALLNRTISDESSNSSSRFFMLQKDSERRRSLGQFMQDYKDLIIDSWSTLLIKQSDTELVVTVYMLEMLLDGMRDFLLKKDNTKMQKMIDDIRGLLDYDTAKIGQINLALYHFSDSIQPVLRRLDIKPHWMFALSNLITSAVQCAISILSPDLSLLLHAQDNLPSTSSIVAIRNSSLSEGEALIESRPPSREERVREDRKELRTLQEENEILIERLLQVERELNAQLKSGITRANRFRDFAMYRNTYPPFRTPPVAHAPPTPPFSASCGAQPSGTFTNQPPSFASIKPIAQKIIMPPGTENNYQVTRVQEELVSWLRGLEIDERSIALIASEAYTKSDMMDFVTRDELLSIGVGGGSSCRIMRAIGEVRERQRRQPVFLSPMRSRDDSLDDYHSSSADDMYTGAAAETSSGN.

Disordered stretches follow at residues 1–35 (MSQN…PTAY) and 190–209 (LQSY…FART). Residues 22-33 (LPLPPRGAPPPT) are compositionally biased toward pro residues. Positions 664-925 (SNERVVLGKG…AKDLLQDPFI (262 aa)) constitute a Protein kinase domain. ATP is bound by residues 670–678 (LGKGTYGTV) and K693. D790 (proton acceptor) is an active-site residue. The segment at 1022-1050 (IDHARNRTFSSSSPVPDGQSSAGTNMSHP) is disordered. Positions 1031–1042 (SSSSPVPDGQSS) are enriched in low complexity. A coiled-coil region spans residues 1276–1314 (SREERVREDRKELRTLQEENEILIERLLQVERELNAQLK). Positions 1461 to 1498 (QPVFLSPMRSRDDSLDDYHSSSADDMYTGAAAETSSGN) are disordered. The span at 1469-1479 (RSRDDSLDDYH) shows a compositional bias: basic and acidic residues.

Belongs to the protein kinase superfamily. STE Ser/Thr protein kinase family. MAP kinase kinase kinase subfamily. In terms of assembly, interacts with unc-43. Interacts with sek-1. Requires Mg(2+) as cofactor. May be phosphorylated upon pathogenic bacterial infection. May be regulated by proteasomal degradation mediated by the E3-ubiquitin ligase rle-1. Expressed in intestine, hypodermis, rectal gland cell and neurons including sensory AWC neurons.

The protein resides in the cell projection. It localises to the axon. Its subcellular location is the perikaryon. The catalysed reaction is L-seryl-[protein] + ATP = O-phospho-L-seryl-[protein] + ADP + H(+). It catalyses the reaction L-threonyl-[protein] + ATP = O-phospho-L-threonyl-[protein] + ADP + H(+). Its function is as follows. Serine/threonine-protein kinase which, by phosphorylating and activating sek-1, plays an important role in the activation of the p38 pathway also composed of the downstream effectors sek-1 and pmk-1. Downstream of CaMKII unc-43 and adapter protein tir-1, plays a role in determining asymmetric cell fates in olfactory AWC neurons during neuronal development. Activation results in the repression of odorant receptor str-2 expression in one of the 2 AWC neurons. Involved in resistance to pathogenic Gram-positive and Gram-negative bacterial and fungal infection. Involved in resistance to the nematotoxic C.cinerea galectin Cgl2. Probably by activating the sek1/pmk-1/skn-1 pathway, involved in the up-regulation of gcs-1 and glutathione-S-transferase gst-4 expression upon bacterial infection. Probably downstream of tir-1 and nipi-3, required for the expression of antimicrobial peptide nlp-29 in the epidermis in response to fungal infection or physical injury. Plays a role in resistance to several environmental stresses including oxidative, protein misfolding (ER) and osmotic stresses, and DNA-damaging reagents. Plays a role in the stabilization of transcription factor rnt-1 in the intestine during oxidative stress. Involved in germline apoptosis induced by heavy metals, such as Cu(2+). In addition, plays a role in the up-regulation of gcs-1 upon arsenite treatment, most likely through activation of pmk-1, to confer protection against toxicity induced by heavy metals. Plays a role downstream of tir-1 in regulating susceptibility to anoxia. Involved in egg laying. This is Mitogen-activated protein kinase kinase kinase nsy-1 from Caenorhabditis elegans.